A 435-amino-acid polypeptide reads, in one-letter code: Bifunctional protein GlmU (435 aa).

The pyrophosphorylase stretch occupies residues 1–224; sequence MNDTSIIILA…EQNFMGINDK (224 aa). Residues 9 to 12, Lys23, Gln75, and 82 to 83 each bind UDP-N-acetyl-alpha-D-glucosamine; these read LAAG and GT. Asp103 contributes to the Mg(2+) binding site. UDP-N-acetyl-alpha-D-glucosamine-binding residues include Gly136, Glu150, Asn165, and Asn222. Asn222 provides a ligand contact to Mg(2+). The tract at residues 225-245 is linker; sequence FQLSVAEKIMQDEIKQDLMKA. The segment at 246 to 435 is N-acetyltransferase; that stretch reads GVLMRLPESI…KFFGKNNAEK (190 aa). Arg309 and Lys326 together coordinate UDP-N-acetyl-alpha-D-glucosamine. His337 functions as the Proton acceptor in the catalytic mechanism. Tyr340 and Asn351 together coordinate UDP-N-acetyl-alpha-D-glucosamine. Acetyl-CoA is bound by residues 360–361, Ser379, Ala397, and Arg414; that span reads NY.

In the N-terminal section; belongs to the N-acetylglucosamine-1-phosphate uridyltransferase family. It in the C-terminal section; belongs to the transferase hexapeptide repeat family. As to quaternary structure, homotrimer. It depends on Mg(2+) as a cofactor.

It is found in the cytoplasm. It catalyses the reaction alpha-D-glucosamine 1-phosphate + acetyl-CoA = N-acetyl-alpha-D-glucosamine 1-phosphate + CoA + H(+). The enzyme catalyses N-acetyl-alpha-D-glucosamine 1-phosphate + UTP + H(+) = UDP-N-acetyl-alpha-D-glucosamine + diphosphate. It participates in nucleotide-sugar biosynthesis; UDP-N-acetyl-alpha-D-glucosamine biosynthesis; N-acetyl-alpha-D-glucosamine 1-phosphate from alpha-D-glucosamine 6-phosphate (route II): step 2/2. The protein operates within nucleotide-sugar biosynthesis; UDP-N-acetyl-alpha-D-glucosamine biosynthesis; UDP-N-acetyl-alpha-D-glucosamine from N-acetyl-alpha-D-glucosamine 1-phosphate: step 1/1. It functions in the pathway bacterial outer membrane biogenesis; LPS lipid A biosynthesis. Functionally, catalyzes the last two sequential reactions in the de novo biosynthetic pathway for UDP-N-acetylglucosamine (UDP-GlcNAc). The C-terminal domain catalyzes the transfer of acetyl group from acetyl coenzyme A to glucosamine-1-phosphate (GlcN-1-P) to produce N-acetylglucosamine-1-phosphate (GlcNAc-1-P), which is converted into UDP-GlcNAc by the transfer of uridine 5-monophosphate (from uridine 5-triphosphate), a reaction catalyzed by the N-terminal domain. The chain is Bifunctional protein GlmU from Campylobacter curvus (strain 525.92).